The following is a 142-amino-acid chain: gSG7 salivary protein (142 aa).

A signal peptide spans M1 to A26. 2 disulfides stabilise this stretch: C84/C139 and C107/C117.

Its subcellular location is the secreted. Salivary protein that moderately inhibits the alternative pathway for complement system activation in the host. This Anopheles darlingi (Mosquito) protein is gSG7 salivary protein.